Consider the following 998-residue polypeptide: UPF0182 protein AAur_2732 (998 aa).

7 helical membrane-spanning segments follow: residues Gly18–Ala38, Ile64–Ile84, Val115–Gln135, Phe168–Ile188, Gln211–Leu231, Ala260–Gly280, and Ile287–Ile307. Disordered regions lie at residues Gly490–Gly518, Leu888–Ala923, and Gln971–Ser998. The span at Pro496–Gly509 shows a compositional bias: basic and acidic residues. Residues Thr908 to Gly919 are compositionally biased toward pro residues. Residues Ala976 to Ala990 show a composition bias toward low complexity.

The protein belongs to the UPF0182 family.

Its subcellular location is the cell membrane. This Paenarthrobacter aurescens (strain TC1) protein is UPF0182 protein AAur_2732.